Here is a 289-residue protein sequence, read N- to C-terminus: Glucosamine-6-phosphate deaminase 1 (289 aa).

Lys64 carries the N6-acetyllysine modification. Asp72 functions as the Proton acceptor; for enolization step in the catalytic mechanism. Asp141 (for ring-opening step) is an active-site residue. The Proton acceptor; for ring-opening step role is filled by His143. Glu148 (for ring-opening step) is an active-site residue. Thr161 bears the Phosphothreonine mark.

It belongs to the glucosamine/galactosamine-6-phosphate isomerase family. As to quaternary structure, homohexamer.

Its subcellular location is the cytoplasm. The catalysed reaction is alpha-D-glucosamine 6-phosphate + H2O = beta-D-fructose 6-phosphate + NH4(+). It participates in nucleotide-sugar biosynthesis; UDP-N-acetyl-alpha-D-glucosamine biosynthesis; alpha-D-glucosamine 6-phosphate from D-fructose 6-phosphate: step 1/1. Allosterically activated by N-acetylglucosamine-6-phosphate (GlcNAc6P). Functionally, catalyzes the reversible conversion of alpha-D-glucosamine 6-phosphate (GlcN-6P) into beta-D-fructose 6-phosphate (Fru-6P) and ammonium ion, a regulatory reaction step in de novo uridine diphosphate-N-acetyl-alpha-D-glucosamine (UDP-GlcNAc) biosynthesis via hexosamine pathway. Deamination is coupled to aldo-keto isomerization mediating the metabolic flux from UDP-GlcNAc toward Fru-6P. At high ammonium level can drive amination and isomerization of Fru-6P toward hexosamines and UDP-GlcNAc synthesis. Has a role in fine tuning the metabolic fluctuations of cytosolic UDP-GlcNAc and their effects on hyaluronan synthesis that occur during tissue remodeling. Seems to trigger calcium oscillations in mammalian eggs. These oscillations serve as the essential trigger for egg activation and early development of the embryo. The chain is Glucosamine-6-phosphate deaminase 1 from Bos taurus (Bovine).